The primary structure comprises 2141 residues: Oxygen-regulated protein 1 (2141 aa).

Positions 1–10 (MSETSSTSVS) are enriched in polar residues. A disordered region spans residues 1–20 (MSETSSTSVSMIHRSFEGQG). The 83-residue stretch at 34-116 (KKISFYKSGD…RRKVQPVDLD (83 aa)) folds into the Doublecortin 1 domain. The tract at residues 126-149 (LSSRAISAHAQRSPPTSIGAAGAP) is disordered. The 80-residue stretch at 156–235 (RRLLVFRNGD…REPFKPGNYD (80 aa)) folds into the Doublecortin 2 domain. Disordered regions lie at residues 259–278 (RSES…SQIY), 1432–1458 (YTSS…SSER), and 1589–1612 (DWSE…GPNG). Over residues 268–278 (HVPSSPRSQIY) the composition is skewed to polar residues. Over residues 1435–1444 (SDKEDSKTSE) the composition is skewed to basic and acidic residues. Composition is skewed to polar residues over residues 1448-1458 (SITNSMTSSER) and 1598-1610 (ENEQ…SDGP).

Interacts (via the doublecortin domains) with microtubules. Interacts with RP1L1. Interacts with MAK.

It is found in the cytoplasm. It localises to the cytoskeleton. The protein localises to the cilium axoneme. The protein resides in the cell projection. Its subcellular location is the cilium. It is found in the photoreceptor outer segment. Its function is as follows. Microtubule-associated protein regulating the stability and length of the microtubule-based axoneme of photoreceptors. Required for the differentiation of photoreceptor cells, it plays a role in the organization of the outer segment of rod and cone photoreceptors ensuring the correct orientation and higher-order stacking of outer segment disks along the photoreceptor axoneme. This chain is Oxygen-regulated protein 1 (RP1), found in Canis lupus familiaris (Dog).